The following is a 402-amino-acid chain: Phosphoglycerate kinase (402 aa).

Substrate-binding positions include 24-26 (DFN), Arg40, 63-66 (HFGR), Arg122, and Arg155. Residues Lys206, Gly297, Glu328, and 357–360 (GGDS) each bind ATP.

This sequence belongs to the phosphoglycerate kinase family. Monomer.

The protein resides in the cytoplasm. The enzyme catalyses (2R)-3-phosphoglycerate + ATP = (2R)-3-phospho-glyceroyl phosphate + ADP. It functions in the pathway carbohydrate degradation; glycolysis; pyruvate from D-glyceraldehyde 3-phosphate: step 2/5. This chain is Phosphoglycerate kinase, found in Prochlorococcus marinus (strain SARG / CCMP1375 / SS120).